Here is a 232-residue protein sequence, read N- to C-terminus: MTAQKMSAQEIIAFIGNAEKKTNVKVTFEGALAAALPENVVKLGNVLFGDWKDIEPLLANLTENKDYVVEQDGRNSAVPLLDKRNINARIEPGAIIRDQVTIEDNAVVMMGAIINIGAEIGEGTMIDMGAILGGRATVGKNSHIGAGAVLAGVIEPASADPVRIGDNVLVGANAVIIEGVQVGSGSVVAAGAIVTQDVPDNVVVAGVPARVIKEIDEKTQQKTALEDALRNL.

This sequence belongs to the transferase hexapeptide repeat family. DapH subfamily.

The catalysed reaction is (S)-2,3,4,5-tetrahydrodipicolinate + acetyl-CoA + H2O = L-2-acetamido-6-oxoheptanedioate + CoA. It participates in amino-acid biosynthesis; L-lysine biosynthesis via DAP pathway; LL-2,6-diaminopimelate from (S)-tetrahydrodipicolinate (acetylase route): step 1/3. In terms of biological role, catalyzes the transfer of an acetyl group from acetyl-CoA to tetrahydrodipicolinate. The chain is 2,3,4,5-tetrahydropyridine-2,6-dicarboxylate N-acetyltransferase from Streptococcus mutans serotype c (strain ATCC 700610 / UA159).